Consider the following 177-residue polypeptide: Coatomer subunit zeta-3 (177 aa).

The protein belongs to the adaptor complexes small subunit family. In terms of assembly, oligomeric complex that consists of at least the alpha, beta, beta', gamma, delta, epsilon and zeta subunits.

The protein resides in the cytoplasm. The protein localises to the golgi apparatus membrane. It localises to the cytoplasmic vesicle. It is found in the COPI-coated vesicle membrane. Its function is as follows. The coatomer is a cytosolic protein complex that binds to dilysine motifs and reversibly associates with Golgi non-clathrin-coated vesicles, which further mediate biosynthetic protein transport from the ER, via the Golgi up to the trans Golgi network. Coatomer complex is required for budding from Golgi membranes, and is essential for the retrograde Golgi-to-ER transport of dilysine-tagged proteins. The zeta subunit may be involved in regulating the coat assembly and, hence, the rate of biosynthetic protein transport due to its association-dissociation properties with the coatomer complex. This Oryza sativa subsp. japonica (Rice) protein is Coatomer subunit zeta-3.